Consider the following 930-residue polypeptide: Translation initiation factor IF-2 (930 aa).

Over residues 50–67 (FKPAAAPKVEAKPAAPKV) the composition is skewed to low complexity. 2 disordered regions span residues 50–195 (FKPA…PRID) and 260–346 (EVVP…HELP). Basic and acidic residues-rich tracts occupy residues 68–90 (SAEKKTEKSEPAKPAVAKEEAKP) and 110–125 (FKAEREARAKEQAERR). Over residues 129–141 (KGNNRDQQQNGNR) the composition is skewed to low complexity. 2 stretches are compositionally biased toward basic and acidic residues: residues 157-167 (RDNRRFNDQAK) and 262-295 (VPEKKEPAVDTRRKKQARPDKNRDDYDHEEDGPR). The segment covering 309–318 (NQKNSNWNNN) has biased composition (low complexity). Over residues 337–346 (VTERKFHELP) the composition is skewed to basic and acidic residues. A tr-type G domain is found at 432–599 (ERPPVVTIMG…TVLLVAEIQE (168 aa)). Residues 441–448 (GHVDHGKT) are G1. 441-448 (GHVDHGKT) contacts GTP. The segment at 466-470 (GITQH) is G2. Residues 487–490 (DTPG) form a G3 region. GTP is bound by residues 487-491 (DTPGH) and 541-544 (NKID). The tract at residues 541-544 (NKID) is G4. Residues 577–579 (SAK) form a G5 region.

The protein belongs to the TRAFAC class translation factor GTPase superfamily. Classic translation factor GTPase family. IF-2 subfamily.

It localises to the cytoplasm. One of the essential components for the initiation of protein synthesis. Protects formylmethionyl-tRNA from spontaneous hydrolysis and promotes its binding to the 30S ribosomal subunits. Also involved in the hydrolysis of GTP during the formation of the 70S ribosomal complex. This chain is Translation initiation factor IF-2, found in Streptococcus pneumoniae (strain ATCC BAA-255 / R6).